Consider the following 251-residue polypeptide: NADPH-dependent oxidoreductase (251 aa).

The protein belongs to the flavin oxidoreductase frp family. FMN is required as a cofactor.

Functionally, reduces FMN, organic nitro compounds and disulfide DTNB. Involved in maintenance of the cellular redox state and the disulfide stress response. This chain is NADPH-dependent oxidoreductase (nfrA), found in Staphylococcus aureus (strain MRSA252).